A 272-amino-acid chain; its full sequence is Cerberus (272 aa).

The first 17 residues, 1–17 (MHLLLVQLLVLLPLGKA), serve as a signal peptide directing secretion. 4 cysteine pairs are disulfide-bonded: Cys162–Cys209, Cys176–Cys223, Cys186–Cys239, and Cys190–Cys241. Residues 162 to 246 (CRTVPFNQTI…EECQCMVKTE (85 aa)) enclose the CTCK domain. 2 N-linked (GlcNAc...) asparagine glycosylation sites follow: Asn168 and Asn222.

The protein belongs to the DAN family. In terms of assembly, forms monomers and predominantly dimers. In terms of processing, N-glycosylated.

It localises to the secreted. Functionally, cytokine that may play a role in anterior neural induction and somite formation during embryogenesis in part, through a BMP-inhibitory mechanism. Can regulate Nodal signaling during gastrulation as well as the formation and patterning of the primitive streak. The sequence is that of Cerberus (Cer1) from Mus musculus (Mouse).